The primary structure comprises 368 residues: Probable dual-specificity RNA methyltransferase RlmN (368 aa).

Residue glutamate 109 is the Proton acceptor of the active site. The Radical SAM core domain occupies 115-355 (YPDRVTMCIS…VTVRDTRGQE (241 aa)). Cysteine 122 and cysteine 360 form a disulfide bridge. The [4Fe-4S] cluster site is built by cysteine 129, cysteine 133, and cysteine 136. S-adenosyl-L-methionine-binding positions include 184–185 (GE), serine 218, 241–243 (SLH), and asparagine 317. Cysteine 360 (S-methylcysteine intermediate) is an active-site residue.

Belongs to the radical SAM superfamily. RlmN family. [4Fe-4S] cluster is required as a cofactor.

The protein resides in the cytoplasm. The enzyme catalyses adenosine(2503) in 23S rRNA + 2 reduced [2Fe-2S]-[ferredoxin] + 2 S-adenosyl-L-methionine = 2-methyladenosine(2503) in 23S rRNA + 5'-deoxyadenosine + L-methionine + 2 oxidized [2Fe-2S]-[ferredoxin] + S-adenosyl-L-homocysteine. It carries out the reaction adenosine(37) in tRNA + 2 reduced [2Fe-2S]-[ferredoxin] + 2 S-adenosyl-L-methionine = 2-methyladenosine(37) in tRNA + 5'-deoxyadenosine + L-methionine + 2 oxidized [2Fe-2S]-[ferredoxin] + S-adenosyl-L-homocysteine. In terms of biological role, specifically methylates position 2 of adenine 2503 in 23S rRNA and position 2 of adenine 37 in tRNAs. This Streptomyces griseus subsp. griseus (strain JCM 4626 / CBS 651.72 / NBRC 13350 / KCC S-0626 / ISP 5235) protein is Probable dual-specificity RNA methyltransferase RlmN.